The chain runs to 361 residues: Large-conductance mechanosensitive channel MscMJLR (361 aa).

Helical transmembrane passes span 20 to 40 (ILSL…NALI), 65 to 85 (LPVA…FLYL), 89 to 109 (LKTA…VVFF), 137 to 157 (IVVL…LLLI), and 177 to 197 (LAVA…LIIL).

This sequence belongs to the MscS (TC 1.A.23) family.

The protein resides in the cell membrane. Functionally, large-conductance mechanosensitive channel that opens in response to stretch forces in the membrane lipid bilayer. Selective for cations. Rectifies with voltage. The protein is Large-conductance mechanosensitive channel MscMJLR of Methanocaldococcus jannaschii (strain ATCC 43067 / DSM 2661 / JAL-1 / JCM 10045 / NBRC 100440) (Methanococcus jannaschii).